Here is a 462-residue protein sequence, read N- to C-terminus: Argininosuccinate lyase (462 aa).

It belongs to the lyase 1 family. Argininosuccinate lyase subfamily.

It localises to the cytoplasm. It carries out the reaction 2-(N(omega)-L-arginino)succinate = fumarate + L-arginine. The protein operates within amino-acid biosynthesis; L-arginine biosynthesis; L-arginine from L-ornithine and carbamoyl phosphate: step 3/3. This Leuconostoc citreum (strain KM20) protein is Argininosuccinate lyase.